The following is an 80-amino-acid chain: Putative defensin-like protein 15 (80 aa).

Residues 1–29 (MAKFASIITFIYAALVLFAAFEVPTMVEA) form the signal peptide. The residue at position 30 (Gln-30) is a Pyrrolidone carboxylic acid. Disulfide bonds link Cys-33–Cys-80, Cys-44–Cys-65, Cys-50–Cys-74, and Cys-54–Cys-76.

This sequence belongs to the DEFL family.

The protein resides in the secreted. Its function is as follows. Confers broad-spectrum resistance to pathogens. This is Putative defensin-like protein 15 (PDF1.2B) from Arabidopsis thaliana (Mouse-ear cress).